Consider the following 458-residue polypeptide: ATP synthase subunit beta (458 aa).

148–155 (GGAGVGKT) lines the ATP pocket.

This sequence belongs to the ATPase alpha/beta chains family. In terms of assembly, F-type ATPases have 2 components, CF(1) - the catalytic core - and CF(0) - the membrane proton channel. CF(1) has five subunits: alpha(3), beta(3), gamma(1), delta(1), epsilon(1). CF(0) has three main subunits: a(1), b(2) and c(9-12). The alpha and beta chains form an alternating ring which encloses part of the gamma chain. CF(1) is attached to CF(0) by a central stalk formed by the gamma and epsilon chains, while a peripheral stalk is formed by the delta and b chains.

The protein localises to the cell inner membrane. It catalyses the reaction ATP + H2O + 4 H(+)(in) = ADP + phosphate + 5 H(+)(out). In terms of biological role, produces ATP from ADP in the presence of a proton gradient across the membrane. The catalytic sites are hosted primarily by the beta subunits. The chain is ATP synthase subunit beta from Alkalilimnicola ehrlichii (strain ATCC BAA-1101 / DSM 17681 / MLHE-1).